Consider the following 170-residue polypeptide: Urease accessory protein UreE (170 aa).

This sequence belongs to the UreE family.

The protein resides in the cytoplasm. Functionally, involved in urease metallocenter assembly. Binds nickel. Probably functions as a nickel donor during metallocenter assembly. The protein is Urease accessory protein UreE of Helicobacter pylori (strain Shi470).